A 151-amino-acid polypeptide reads, in one-letter code: Large ribosomal subunit protein uL22 (151 aa).

It belongs to the universal ribosomal protein uL22 family. Part of the 50S ribosomal subunit.

Its function is as follows. This protein binds specifically to 23S rRNA. It makes multiple contacts with different domains of the 23S rRNA in the assembled 50S subunit and ribosome. In terms of biological role, the globular domain of the protein is located near the polypeptide exit tunnel on the outside of the subunit, while an extended beta-hairpin is found that lines the wall of the exit tunnel in the center of the 70S ribosome. In Thermofilum pendens (strain DSM 2475 / Hrk 5), this protein is Large ribosomal subunit protein uL22.